Here is a 296-residue protein sequence, read N- to C-terminus: Protease HtpX homolog (296 aa).

Helical transmembrane passes span 7–27 and 29–49; these read TVLL…LVAG and QGMI…YFFS. Zn(2+) is bound at residue H131. E132 is a catalytic residue. H135 contributes to the Zn(2+) binding site. The next 2 helical transmembrane spans lie at 141–161 and 178–198; these read ILIS…ANMA and IASI…ATLI. E207 provides a ligand contact to Zn(2+).

The protein belongs to the peptidase M48B family. Zn(2+) is required as a cofactor.

The protein resides in the cell inner membrane. The polypeptide is Protease HtpX homolog (Sulfurihydrogenibium sp. (strain YO3AOP1)).